The following is a 420-amino-acid chain: Acyl-coenzyme A amino acid N-acyltransferase 2 (420 aa).

Active-site charge relay system residues include serine 235, aspartate 329, and histidine 363. Residues 418 to 420 (SKL) carry the Microbody targeting signal motif.

Belongs to the C/M/P thioester hydrolase family.

It is found in the peroxisome. Acyltransferase which efficiently conjugates very long-chain and long-chain fatty acids to taurine. Shows no conjugation activity in the presence of glycine. The sequence is that of Acyl-coenzyme A amino acid N-acyltransferase 2 from Mus musculus (Mouse).